The primary structure comprises 156 residues: 6,7-dimethyl-8-ribityllumazine synthase (156 aa).

5-amino-6-(D-ribitylamino)uracil is bound by residues Phe-23, 57-59 (AFE), and 81-83 (AVI). 86–87 (ST) lines the (2S)-2-hydroxy-3-oxobutyl phosphate pocket. His-89 serves as the catalytic Proton donor. Phe-114 contributes to the 5-amino-6-(D-ribitylamino)uracil binding site. Arg-128 provides a ligand contact to (2S)-2-hydroxy-3-oxobutyl phosphate.

The protein belongs to the DMRL synthase family.

It catalyses the reaction (2S)-2-hydroxy-3-oxobutyl phosphate + 5-amino-6-(D-ribitylamino)uracil = 6,7-dimethyl-8-(1-D-ribityl)lumazine + phosphate + 2 H2O + H(+). Its pathway is cofactor biosynthesis; riboflavin biosynthesis; riboflavin from 2-hydroxy-3-oxobutyl phosphate and 5-amino-6-(D-ribitylamino)uracil: step 1/2. Functionally, catalyzes the formation of 6,7-dimethyl-8-ribityllumazine by condensation of 5-amino-6-(D-ribitylamino)uracil with 3,4-dihydroxy-2-butanone 4-phosphate. This is the penultimate step in the biosynthesis of riboflavin. The protein is 6,7-dimethyl-8-ribityllumazine synthase of Brachyspira hyodysenteriae (strain ATCC 49526 / WA1).